We begin with the raw amino-acid sequence, 206 residues long: Small ribosomal subunit protein uS4 (206 aa).

Residues 96–156 (CRLDNVVYRM…EKAKNQLRIV (61 aa)) enclose the S4 RNA-binding domain.

The protein belongs to the universal ribosomal protein uS4 family. Part of the 30S ribosomal subunit. Contacts protein S5. The interaction surface between S4 and S5 is involved in control of translational fidelity.

In terms of biological role, one of the primary rRNA binding proteins, it binds directly to 16S rRNA where it nucleates assembly of the body of the 30S subunit. Functionally, with S5 and S12 plays an important role in translational accuracy. This is Small ribosomal subunit protein uS4 from Pseudomonas fluorescens (strain Pf0-1).